Consider the following 193-residue polypeptide: Cyanate hydratase (193 aa).

Active-site residues include Arg121, Glu124, and Ser147.

The protein belongs to the cyanase family.

The enzyme catalyses cyanate + hydrogencarbonate + 3 H(+) = NH4(+) + 2 CO2. In terms of biological role, catalyzes the reaction of cyanate with bicarbonate to produce ammonia and carbon dioxide. This is Cyanate hydratase from Phaeodactylum tricornutum (strain CCAP 1055/1).